A 200-amino-acid polypeptide reads, in one-letter code: Small ribosomal subunit protein eS8B (200 aa).

The disordered stretch occupies residues 1–41; sequence MGITRDSRHKRSATGAKRAQYRKKRKFELGRQPSNTRIGPK. A phosphoserine mark is found at Ser-62 and Ser-99. A disordered region spans residues 124–145; it reads KGKKATATPTPKSKHVQRKHSA. Positions 135 to 145 are enriched in basic residues; the sequence is KSKHVQRKHSA. Phosphoserine occurs at positions 150, 154, and 171.

It belongs to the eukaryotic ribosomal protein eS8 family. Component of the small ribosomal subunit (SSU). Mature yeast ribosomes consist of a small (40S) and a large (60S) subunit. The 40S small subunit contains 1 molecule of ribosomal RNA (18S rRNA) and at least 33 different proteins. The large 60S subunit contains 3 rRNA molecules (25S, 5.8S and 5S rRNA) and at least 46 different proteins.

It is found in the cytoplasm. In terms of biological role, component of the ribosome, a large ribonucleoprotein complex responsible for the synthesis of proteins in the cell. The small ribosomal subunit (SSU) binds messenger RNAs (mRNAs) and translates the encoded message by selecting cognate aminoacyl-transfer RNA (tRNA) molecules. The large subunit (LSU) contains the ribosomal catalytic site termed the peptidyl transferase center (PTC), which catalyzes the formation of peptide bonds, thereby polymerizing the amino acids delivered by tRNAs into a polypeptide chain. The nascent polypeptides leave the ribosome through a tunnel in the LSU and interact with protein factors that function in enzymatic processing, targeting, and the membrane insertion of nascent chains at the exit of the ribosomal tunnel. The chain is Small ribosomal subunit protein eS8B (rps802) from Schizosaccharomyces pombe (strain 972 / ATCC 24843) (Fission yeast).